We begin with the raw amino-acid sequence, 428 residues long: Ribulose bisphosphate carboxylase (428 aa).

Lys151 functions as the Proton acceptor in the catalytic mechanism. Lys153 lines the substrate pocket. Residues Lys177, Asp179, and Glu180 each contribute to the Mg(2+) site. N6-carboxylysine is present on Lys177. His270 functions as the Proton acceptor in the catalytic mechanism. Substrate contacts are provided by residues Arg271, His303, 354 to 356 (SGG), and 376 to 379 (QFGG).

It belongs to the RuBisCO large chain family. Type III subfamily. As to quaternary structure, homodimer or homodecamer. In contrast to form I RuBisCO, the form III RuBisCO is composed solely of large subunits. The cofactor is Mg(2+).

It carries out the reaction 2 (2R)-3-phosphoglycerate + 2 H(+) = D-ribulose 1,5-bisphosphate + CO2 + H2O. The catalysed reaction is D-ribulose 1,5-bisphosphate + O2 = 2-phosphoglycolate + (2R)-3-phosphoglycerate + 2 H(+). Catalyzes the addition of molecular CO(2) and H(2)O to ribulose 1,5-bisphosphate (RuBP), generating two molecules of 3-phosphoglycerate (3-PGA). Functions in an archaeal AMP degradation pathway, together with AMP phosphorylase and R15P isomerase. The sequence is that of Ribulose bisphosphate carboxylase from Methanosarcina mazei (strain ATCC BAA-159 / DSM 3647 / Goe1 / Go1 / JCM 11833 / OCM 88) (Methanosarcina frisia).